Consider the following 166-residue polypeptide: NADH-ubiquinone oxidoreductase chain 6 (166 aa).

The next 5 helical transmembrane spans lie at 1–21 (MMYF…AFAS), 26–46 (IYGG…VVSL), 47–67 (GGSF…LVVF), 87–107 (VFTN…YFSG), and 139–159 (CGGW…FVVL).

Belongs to the complex I subunit 6 family. As to quaternary structure, core subunit of respiratory chain NADH dehydrogenase (Complex I) which is composed of 45 different subunits.

The protein resides in the mitochondrion inner membrane. The enzyme catalyses a ubiquinone + NADH + 5 H(+)(in) = a ubiquinol + NAD(+) + 4 H(+)(out). In terms of biological role, core subunit of the mitochondrial membrane respiratory chain NADH dehydrogenase (Complex I) which catalyzes electron transfer from NADH through the respiratory chain, using ubiquinone as an electron acceptor. Essential for the catalytic activity and assembly of complex I. The protein is NADH-ubiquinone oxidoreductase chain 6 (MT-ND6) of Ornithorhynchus anatinus (Duckbill platypus).